The chain runs to 264 residues: Thymidylate synthase (264 aa).

Residue Arg-21 participates in dUMP binding. His-51 lines the (6R)-5,10-methylene-5,6,7,8-tetrahydrofolate pocket. 126–127 (RR) is a dUMP binding site. The active-site Nucleophile is the Cys-146. DUMP-binding positions include 166-169 (RSAD), Asn-177, and 207-209 (HIY). Asp-169 contacts (6R)-5,10-methylene-5,6,7,8-tetrahydrofolate. Residue Ser-263 coordinates (6R)-5,10-methylene-5,6,7,8-tetrahydrofolate.

Belongs to the thymidylate synthase family. Bacterial-type ThyA subfamily. In terms of assembly, homodimer.

It localises to the cytoplasm. The enzyme catalyses dUMP + (6R)-5,10-methylene-5,6,7,8-tetrahydrofolate = 7,8-dihydrofolate + dTMP. The protein operates within pyrimidine metabolism; dTTP biosynthesis. In terms of biological role, catalyzes the reductive methylation of 2'-deoxyuridine-5'-monophosphate (dUMP) to 2'-deoxythymidine-5'-monophosphate (dTMP) while utilizing 5,10-methylenetetrahydrofolate (mTHF) as the methyl donor and reductant in the reaction, yielding dihydrofolate (DHF) as a by-product. This enzymatic reaction provides an intracellular de novo source of dTMP, an essential precursor for DNA biosynthesis. In Bacillus velezensis (strain DSM 23117 / BGSC 10A6 / LMG 26770 / FZB42) (Bacillus amyloliquefaciens subsp. plantarum), this protein is Thymidylate synthase.